The primary structure comprises 955 residues: Translation initiation factor IF-2 (955 aa).

The tract at residues 49–352 (AFSQSSESTE…QAPSFGGVKI (304 aa)) is disordered. The span at 77 to 88 (PQQQTKASAPSA) shows a compositional bias: low complexity. 4 stretches are compositionally biased toward pro residues: residues 95–121 (PAVP…PGPR), 149–159 (RPVPKPGPRPG), 188–202 (RPGP…PPRP), and 209–223 (PPRP…PRPG). The span at 225 to 235 (GTAGGRPGSSA) shows a compositional bias: gly residues. Positions 238 to 264 (PPRPVPRPGPRPSPMNMPASRPTPPGG) are enriched in pro residues. A compositionally biased stretch (gly residues) spans 273–322 (SGGGRGRGGGGGAGPRGGGAGGGAPRTGFGGRPGGGRGRGGTAGAFGRPG). Residues 326–335 (SRSRKSKKQR) show a composition bias toward basic residues. Positions 448–620 (PRAPVVTVMG…IILTADAELD (173 aa)) constitute a tr-type G domain. The interval 457 to 464 (GHVDHGKT) is G1. 457–464 (GHVDHGKT) lines the GTP pocket. Residues 482-486 (GITQH) form a G2 region. The segment at 507-510 (DTPG) is G3. Residues 507–511 (DTPGH) and 561–564 (NKID) each bind GTP. The interval 561-564 (NKID) is G4. A G5 region spans residues 597–599 (SAK).

This sequence belongs to the TRAFAC class translation factor GTPase superfamily. Classic translation factor GTPase family. IF-2 subfamily.

The protein resides in the cytoplasm. Functionally, one of the essential components for the initiation of protein synthesis. Protects formylmethionyl-tRNA from spontaneous hydrolysis and promotes its binding to the 30S ribosomal subunits. Also involved in the hydrolysis of GTP during the formation of the 70S ribosomal complex. In Thermobifida fusca (strain YX), this protein is Translation initiation factor IF-2.